We begin with the raw amino-acid sequence, 449 residues long: UDP-N-acetylmuramoylalanine--D-glutamate ligase (449 aa).

Residue 118–124 participates in ATP binding; it reads GTNGKTT.

The protein belongs to the MurCDEF family.

It is found in the cytoplasm. The enzyme catalyses UDP-N-acetyl-alpha-D-muramoyl-L-alanine + D-glutamate + ATP = UDP-N-acetyl-alpha-D-muramoyl-L-alanyl-D-glutamate + ADP + phosphate + H(+). The protein operates within cell wall biogenesis; peptidoglycan biosynthesis. In terms of biological role, cell wall formation. Catalyzes the addition of glutamate to the nucleotide precursor UDP-N-acetylmuramoyl-L-alanine (UMA). The polypeptide is UDP-N-acetylmuramoylalanine--D-glutamate ligase (Staphylococcus aureus (strain MSSA476)).